The chain runs to 431 residues: Dihydroorotase (431 aa).

Zn(2+)-binding residues include His-59 and His-61. Substrate-binding positions include 61–63 (HLR) and Asn-93. Residues Asp-151, His-178, His-231, and Asp-304 each contribute to the Zn(2+) site. The active site involves Asp-304. Residues His-308 and 322–323 (FG) each bind substrate.

It belongs to the metallo-dependent hydrolases superfamily. DHOase family. Class I DHOase subfamily. Zn(2+) is required as a cofactor.

It catalyses the reaction (S)-dihydroorotate + H2O = N-carbamoyl-L-aspartate + H(+). It participates in pyrimidine metabolism; UMP biosynthesis via de novo pathway; (S)-dihydroorotate from bicarbonate: step 3/3. Catalyzes the reversible cyclization of carbamoyl aspartate to dihydroorotate. The sequence is that of Dihydroorotase from Caldanaerobacter subterraneus subsp. tengcongensis (strain DSM 15242 / JCM 11007 / NBRC 100824 / MB4) (Thermoanaerobacter tengcongensis).